A 937-amino-acid polypeptide reads, in one-letter code: Putative leucine-rich repeat receptor-like serine/threonine-protein kinase At3g53590 (937 aa).

The first 20 residues, 1-20 (MIPPNINVLIRSICINLVTS), serve as a signal peptide directing secretion. Over 21-547 (LPLNFAYIFI…LLAQTSGIRT (527 aa)) the chain is Extracellular. N-linked (GlcNAc...) asparagine glycosylation is found at N50, N63, N90, and N114. LRR repeat units lie at residues 102 to 126 (LLYL…IGRI), 127 to 150 (SSLK…LGNL), 152 to 173 (NLNR…SFGN), 174 to 198 (LRSI…LSKL), 200 to 222 (KLVH…LAQL), 223 to 249 (PSLT…HFSR), 251 to 270 (VKLS…LSRI), and 271 to 294 (ENLS…KLSD). Residues N162, N184, and N210 are each glycosylated (N-linked (GlcNAc...) asparagine). Residues N272 and N295 are each glycosylated (N-linked (GlcNAc...) asparagine). 3 LRR repeats span residues 296–316 (MTTI…SFSD), 317–341 (LNSL…IWQD), and 343–360 (SFEN…NFSD). 6 N-linked (GlcNAc...) asparagine glycosylation sites follow: N327, N357, N370, N413, N499, and N516. A helical membrane pass occupies residues 548–568 (IVWMMIVAGSVVAATVLSVTA). Residues 569–937 (TLLYVRKRRE…SGFFHAVKPR (369 aa)) lie on the Cytoplasmic side of the membrane. The Protein kinase domain occupies 614–886 (FDSSTLIGRG…SKVVKELEGI (273 aa)). ATP contacts are provided by residues 620–628 (IGRGSYGKV) and K642. D738 acts as the Proton acceptor in catalysis.

Belongs to the protein kinase superfamily. Ser/Thr protein kinase family.

The protein localises to the cell membrane. The enzyme catalyses L-seryl-[protein] + ATP = O-phospho-L-seryl-[protein] + ADP + H(+). It carries out the reaction L-threonyl-[protein] + ATP = O-phospho-L-threonyl-[protein] + ADP + H(+). The chain is Putative leucine-rich repeat receptor-like serine/threonine-protein kinase At3g53590 from Arabidopsis thaliana (Mouse-ear cress).